Consider the following 407-residue polypeptide: Argininosuccinate synthase (407 aa).

ATP contacts are provided by residues 16 to 24 (AYSGGLDTS) and Ala44. L-citrulline contacts are provided by Tyr96 and Ser101. Gly126 is a binding site for ATP. Thr128, Asn132, and Asp133 together coordinate L-aspartate. Asn132 contacts L-citrulline. L-citrulline contacts are provided by Arg136, Ser185, Ser194, Glu270, and Tyr282.

It belongs to the argininosuccinate synthase family. Type 1 subfamily. Homotetramer.

The protein resides in the cytoplasm. It carries out the reaction L-citrulline + L-aspartate + ATP = 2-(N(omega)-L-arginino)succinate + AMP + diphosphate + H(+). It functions in the pathway amino-acid biosynthesis; L-arginine biosynthesis; L-arginine from L-ornithine and carbamoyl phosphate: step 2/3. This Shewanella sediminis (strain HAW-EB3) protein is Argininosuccinate synthase.